The sequence spans 669 residues: MEKIVPPAVRIEELRRILREHEYRYYVLSSPTIDDFEYDAMMKQLEELEREYPEWDSPDSPTHRVGSDKTEGFASVRHDRPMLSLSNTYNYDEIGDFYRRVSEGLQGAPFEIVAELKFDGLSISLIYEDGMLVRAVTRGDGIMGDDVTANVRTIRSVPLRLRGDDYPRMLEVRGEILLPFKEFDRINAQREAEGEPLFANPRNAASGTIKQLDPHIVAGRNLDAYFYYLYSDEPLAENHYDRLMQARQWGFKVSDAVTLCCSKEEVYAFIDRFDTERLTLPVATDGIVLKVNAPAQQDLLGFTAKSPRWAIAYKYQAERVRTRLQHVSYQVGRTGAVTPVANLDPVLISGTVVRRASLHNADFIAEKDLHEGDFVYVEKGGEIIPKIVGVDTDARSIDGRPIVFTVLCPDCATPLVREQGEAAYYCPNAEGCPQQQKGRLEHYCGRKTADINIGPETIELLYSRNMIRNVADFYALTEEQLLTLPGFKKRAAAKLLDSIEASKARPYQAILFGLGIRFVGETVAKKLAAVYPSIDALAAATSEELVQIDEIGERIAAAVLHFFSLRQNRELIERLRLAGVSLEAETVSVAVSNRLAGKTVVISGTFEKRSRDEYKAMVEDNGGRMAGSVSSKTSFILAGSDMGPSKREKAEKLGVRLMSEEEFLRLIEE.

Residue 35–39 coordinates NAD(+); it reads DFEYD. The interval 52-71 is disordered; the sequence is YPEWDSPDSPTHRVGSDKTE. A compositionally biased stretch (basic and acidic residues) spans 61 to 71; that stretch reads PTHRVGSDKTE. Residues 84–85 and Glu-115 contribute to the NAD(+) site; that span reads SL. Lys-117 functions as the N6-AMP-lysine intermediate in the catalytic mechanism. The NAD(+) site is built by Arg-138, Glu-175, Lys-290, and Lys-314. Zn(2+) contacts are provided by Cys-408, Cys-411, Cys-426, and Cys-432. The 80-residue stretch at 590–669 folds into the BRCT domain; that stretch reads AVSNRLAGKT…EEEFLRLIEE (80 aa).

The protein belongs to the NAD-dependent DNA ligase family. LigA subfamily. Mg(2+) serves as cofactor. Requires Mn(2+) as cofactor.

The catalysed reaction is NAD(+) + (deoxyribonucleotide)n-3'-hydroxyl + 5'-phospho-(deoxyribonucleotide)m = (deoxyribonucleotide)n+m + AMP + beta-nicotinamide D-nucleotide.. Its function is as follows. DNA ligase that catalyzes the formation of phosphodiester linkages between 5'-phosphoryl and 3'-hydroxyl groups in double-stranded DNA using NAD as a coenzyme and as the energy source for the reaction. It is essential for DNA replication and repair of damaged DNA. This is DNA ligase from Porphyromonas gingivalis (strain ATCC BAA-308 / W83).